Consider the following 443-residue polypeptide: Elongation factor 1-alpha (443 aa).

The 224-residue stretch at Lys5 to Tyr228 folds into the tr-type G domain. A G1 region spans residues Gly14–Ser21. Position 14–21 (Gly14–Ser21) interacts with GTP. The G2 stretch occupies residues Gly70–Asp74. A G3 region spans residues Asp91–Gly94. Residues Asp91–His95 and Asn153–Asp156 each bind GTP. The tract at residues Asn153–Asp156 is G4. Residues Ser192–Phe194 are G5.

Belongs to the TRAFAC class translation factor GTPase superfamily. Classic translation factor GTPase family. EF-Tu/EF-1A subfamily.

Its subcellular location is the cytoplasm. Functionally, this protein promotes the GTP-dependent binding of aminoacyl-tRNA to the A-site of ribosomes during protein biosynthesis. In Plasmodium falciparum (isolate K1 / Thailand), this protein is Elongation factor 1-alpha (MEF-1).